We begin with the raw amino-acid sequence, 280 residues long: Ribosomal RNA small subunit methyltransferase A (280 aa).

Positions 28, 30, 55, 77, 103, and 122 each coordinate S-adenosyl-L-methionine.

It belongs to the class I-like SAM-binding methyltransferase superfamily. rRNA adenine N(6)-methyltransferase family. RsmA subfamily.

The protein localises to the cytoplasm. It carries out the reaction adenosine(1518)/adenosine(1519) in 16S rRNA + 4 S-adenosyl-L-methionine = N(6)-dimethyladenosine(1518)/N(6)-dimethyladenosine(1519) in 16S rRNA + 4 S-adenosyl-L-homocysteine + 4 H(+). Its function is as follows. Specifically dimethylates two adjacent adenosines (A1518 and A1519) in the loop of a conserved hairpin near the 3'-end of 16S rRNA in the 30S particle. May play a critical role in biogenesis of 30S subunits. This Roseobacter denitrificans (strain ATCC 33942 / OCh 114) (Erythrobacter sp. (strain OCh 114)) protein is Ribosomal RNA small subunit methyltransferase A.